A 375-amino-acid chain; its full sequence is 23S rRNA (uracil(747)-C(5))-methyltransferase RlmC (375 aa).

Residues cysteine 3, cysteine 11, cysteine 14, and cysteine 87 each coordinate [4Fe-4S] cluster. Residues glutamine 212, phenylalanine 241, glutamate 262, and asparagine 307 each contribute to the S-adenosyl-L-methionine site. Cysteine 334 serves as the catalytic Nucleophile.

The protein belongs to the class I-like SAM-binding methyltransferase superfamily. RNA M5U methyltransferase family. RlmC subfamily.

The catalysed reaction is uridine(747) in 23S rRNA + S-adenosyl-L-methionine = 5-methyluridine(747) in 23S rRNA + S-adenosyl-L-homocysteine + H(+). Its function is as follows. Catalyzes the formation of 5-methyl-uridine at position 747 (m5U747) in 23S rRNA. This chain is 23S rRNA (uracil(747)-C(5))-methyltransferase RlmC, found in Escherichia coli O157:H7.